The following is a 208-amino-acid chain: Holliday junction resolvase RecU (208 aa).

Mg(2+)-binding residues include threonine 87, aspartate 89, glutamate 102, and glutamine 121.

It belongs to the RecU family. Mg(2+) is required as a cofactor.

Its subcellular location is the cytoplasm. The enzyme catalyses Endonucleolytic cleavage at a junction such as a reciprocal single-stranded crossover between two homologous DNA duplexes (Holliday junction).. Endonuclease that resolves Holliday junction intermediates in genetic recombination. Cleaves mobile four-strand junctions by introducing symmetrical nicks in paired strands. Promotes annealing of linear ssDNA with homologous dsDNA. Required for DNA repair, homologous recombination and chromosome segregation. This chain is Holliday junction resolvase RecU, found in Staphylococcus aureus (strain MRSA252).